The following is a 271-amino-acid chain: Undecaprenyl-diphosphatase (271 aa).

The next 8 helical transmembrane spans lie at 2–22 (LLIL…FVPV), 42–62 (ANLF…VVYW), 80–100 (LRFW…GFSL), 108–128 (LFNP…MIIV), 149–168 (SIFV…SRSA), 175–195 (WIAG…AIPV), 214–234 (IEFI…LVVI), and 248–268 (IFAI…IFKI).

This sequence belongs to the UppP family.

The protein localises to the cell membrane. It carries out the reaction di-trans,octa-cis-undecaprenyl diphosphate + H2O = di-trans,octa-cis-undecaprenyl phosphate + phosphate + H(+). Catalyzes the dephosphorylation of undecaprenyl diphosphate (UPP). Confers resistance to bacitracin. In Clostridium tetani (strain Massachusetts / E88), this protein is Undecaprenyl-diphosphatase.